Here is a 73-residue protein sequence, read N- to C-terminus: Homeodomain-only protein (73 aa).

The segment at residues 3–62 is a DNA-binding region (homeobox; degenerate); that stretch reads AETASGPTEDQVEILEYNFNKVDKHPDSTTLCLIAAEAGLSEEETQKWFKQRLAKWRRSE.

In terms of assembly, interacts with serum response factor (SRF). Component of a large complex containing histone deacetylases such as HDAC2. Interacts with the acetylated forms of HSPA1A and HSPA1B. Interacts with HSPA8. Widely expressed. Expressed in the heart, brain, placenta, lung, skeletal and smooth muscles, uterus, urinary bladder, kidney and spleen. Down-regulated in some types of cancer such as lung cancer, choriocarcinoma, head and neck squamous cell carcinoma and oral squamous cell carcinoma.

The protein localises to the nucleus. It is found in the cytoplasm. In terms of biological role, atypical homeodomain protein which does not bind DNA and is required to modulate cardiac growth and development. Acts via its interaction with SRF, thereby modulating the expression of SRF-dependent cardiac-specific genes and cardiac development. Prevents SRF-dependent transcription either by inhibiting SRF binding to DNA or by recruiting histone deacetylase (HDAC) proteins that prevent transcription by SRF. Overexpression causes cardiac hypertrophy. May act as a tumor suppressor. Acts as a co-chaperone for HSPA1A and HSPA1B chaperone proteins and assists in chaperone-mediated protein refolding. This chain is Homeodomain-only protein (HOPX), found in Homo sapiens (Human).